Here is a 51-residue protein sequence, read N- to C-terminus: HALDTPHFPQELTSALSKNICITFFSGMFKNVESVAEIFDSLGPSFKQDQA.

This sequence belongs to the phospholipase A2 family. In terms of assembly, interacts with OTOL1.

The protein resides in the secreted. Its function is as follows. Major protein of the otoconia, a calcium carbonate structure in the saccule and utricle of the ear. Together with OTOL1, acts as a scaffold for otoconia biomineralization: sequesters calcium and forms interconnecting fibrils between otoconia that are incorporated into the calcium crystal structure. Together with OTOL1, modulates calcite crystal morphology and growth kinetics. It is unlikely that this protein has phospholipase A2 activity. The polypeptide is Otoconin-90 (OC90) (Cavia porcellus (Guinea pig)).